Reading from the N-terminus, the 274-residue chain is 2,3,4,5-tetrahydropyridine-2,6-dicarboxylate N-succinyltransferase (274 aa).

Residues Arg104 and Asp141 each coordinate substrate.

Belongs to the transferase hexapeptide repeat family. Homotrimer.

Its subcellular location is the cytoplasm. The enzyme catalyses (S)-2,3,4,5-tetrahydrodipicolinate + succinyl-CoA + H2O = (S)-2-succinylamino-6-oxoheptanedioate + CoA. It participates in amino-acid biosynthesis; L-lysine biosynthesis via DAP pathway; LL-2,6-diaminopimelate from (S)-tetrahydrodipicolinate (succinylase route): step 1/3. This is 2,3,4,5-tetrahydropyridine-2,6-dicarboxylate N-succinyltransferase from Shewanella pealeana (strain ATCC 700345 / ANG-SQ1).